Reading from the N-terminus, the 61-residue chain is Transmembrane protein 300R (61 aa).

2 helical membrane-spanning segments follow: residues 5–25 (FLDLYMILSVLAGVIGIFYLT) and 35–55 (SLSYYMTLSVVTGILALIYLQ).

The protein localises to the membrane. This Invertebrate iridescent virus 6 (IIV-6) protein is Transmembrane protein 300R.